A 210-amino-acid chain; its full sequence is Orotate phosphoribosyltransferase (210 aa).

5-phospho-alpha-D-ribose 1-diphosphate is bound by residues Arg-94, Lys-98, His-100, and Glu-120–Ser-128. Ser-124 is a binding site for orotate.

Belongs to the purine/pyrimidine phosphoribosyltransferase family. PyrE subfamily. In terms of assembly, homodimer. Mg(2+) serves as cofactor.

It catalyses the reaction orotidine 5'-phosphate + diphosphate = orotate + 5-phospho-alpha-D-ribose 1-diphosphate. Its pathway is pyrimidine metabolism; UMP biosynthesis via de novo pathway; UMP from orotate: step 1/2. Its function is as follows. Catalyzes the transfer of a ribosyl phosphate group from 5-phosphoribose 1-diphosphate to orotate, leading to the formation of orotidine monophosphate (OMP). The protein is Orotate phosphoribosyltransferase of Bacillus cytotoxicus (strain DSM 22905 / CIP 110041 / 391-98 / NVH 391-98).